Here is a 471-residue protein sequence, read N- to C-terminus: Pancreatic lipase-related protein 2 (471 aa).

An N-terminal signal peptide occupies residues 1-17 (MLPSWTIGLLLLATVRG). A disulfide bridge connects residues C21 and C27. N71 carries an N-linked (GlcNAc...) asparagine glycan. A required for galactolipase activity region spans residues 93–105 (IHGFIDKGEDSWP). C109 and C120 are joined by a disulfide. S171 serves as the catalytic Nucleophile. D195 serves as the catalytic Charge relay system. Residues E206, R209, D211, and D214 each contribute to the Ca(2+) site. Cysteines 256 and 280 form a disulfide. Residues 257-279 (QKNTLSTIVDVDGIWEGIEDFAA) form a required for galactolipase activity region. H282 serves as the catalytic Charge relay system. 2 disulfide bridges follow: C304–C317 and C320–C325. Residue N355 is glycosylated (N-linked (GlcNAc...) asparagine). The region spanning 359–471 (WRYRVSVTLA…ENILQTLNPC (113 aa)) is the PLAT domain. C455 and C471 are disulfide-bonded.

The protein belongs to the AB hydrolase superfamily. Lipase family.

It localises to the secreted. The protein localises to the zymogen granule membrane. It is found in the cell projection. Its subcellular location is the neuron projection. It catalyses the reaction a triacylglycerol + H2O = a diacylglycerol + a fatty acid + H(+). The enzyme catalyses a 1,2-diacyl-3-O-(beta-D-galactosyl)-sn-glycerol + 2 H2O = 3-beta-D-galactosyl-sn-glycerol + 2 a fatty acid + 2 H(+). The catalysed reaction is 1,2,3-tri-(9Z-octadecenoyl)-glycerol + H2O = di-(9Z)-octadecenoylglycerol + (9Z)-octadecenoate + H(+). It carries out the reaction di-(9Z)-octadecenoylglycerol + H2O = (9Z-octadecenoyl)-glycerol + (9Z)-octadecenoate + H(+). It catalyses the reaction (9Z-octadecenoyl)-glycerol + H2O = glycerol + (9Z)-octadecenoate + H(+). The enzyme catalyses 1-(9Z-octadecenoyl)-glycerol + H2O = glycerol + (9Z)-octadecenoate + H(+). The catalysed reaction is 1,2,3-tripropanoylglycerol + H2O = dipropanoylglycerol + propanoate + H(+). It carries out the reaction 1,2,3-tributanoylglycerol + H2O = dibutanoylglycerol + butanoate + H(+). It catalyses the reaction 1,2,3-trioctanoylglycerol + H2O = dioctanoylglycerol + octanoate + H(+). The enzyme catalyses 1,2-didecanoylglycerol + H2O = decanoylglycerol + decanoate + H(+). The catalysed reaction is long chain 1,2-diacyl-3-O-beta-D-galactosyl-sn-glycerol + H2O = long chain acyl-3-O-beta-D-galactosyl-sn-glycerol + a fatty acid + H(+). It carries out the reaction 1,2-dioctanoyl-3-O-beta-D-galactosyl-sn-glycerol + H2O = octanoyl-3-(beta-D-galactosyl)-sn-glycerol + octanoate + H(+). It catalyses the reaction 1,2-didodecanoyl-3-beta-D-galactosyl-sn-glycerol + H2O = dodecanoyl-3-beta-D-galactosyl-sn-glycerol + dodecanoate + H(+). The enzyme catalyses 1-beta-D-galactosyl-2,3-didodecanoyl-sn-glycerol + H2O = 1-beta-D-galactosyl-dodecanoyl-sn-glycerol + dodecanoate + H(+). The catalysed reaction is a 1,2-diacyl-3-O-[alpha-D-galactosyl-(1-&gt;6)-beta-D-galactosyl]-sn-glycerol + H2O = acyl-3-O-[alpha-D-galactosyl-(1-&gt;6)-beta-D-galactosyl]-sn-glycerol + a fatty acid + H(+). It carries out the reaction long chain 1,2-diacyl-3-O-[alpha-D-galactosyl-(1-&gt;6)-beta-D-galactosyl]-sn-glycerol + H2O = long chain acyl-3-O-[alpha-D-galactosyl-(1-&gt;6)-beta-D-galactosyl]-sn-glycerol + a fatty acid + H(+). It catalyses the reaction 1,2-dioctanoyl-3-O-[alpha-D-galactosyl-(1-&gt;6)-beta-D-galactosyl]-sn-glycerol + H2O = octanoyl-3-O-[alpha-D-galactosyl-(1-&gt;6)-beta-D-galactosyl]-sn-glycerol + octanoate + H(+). The enzyme catalyses 1,2-didodecanoyl-3-O-[alpha-D-galactosyl-(1-&gt;6)-beta-D-galactosyl]-sn-glycerol + H2O = dodecanoyl-3-O-[alpha-D-galactosyl-(1-&gt;6)-beta-D-galactosyl]-sn-glycerol + dodecanoate + H(+). The catalysed reaction is a 1,2-diacyl-sn-glycero-3-phosphocholine + H2O = a monoacyl-sn-glycero-3-phosphocholine + a fatty acid + H(+). It participates in glycerolipid metabolism; triacylglycerol degradation. It functions in the pathway glycolipid metabolism. With respect to regulation, up-regulated by CLPS in the presence of increasing concentrations of bile salts. Its function is as follows. Lipase that primarily hydrolyzes triglycerides and galactosylglycerides. In neonates, may play a major role in pancreatic digestion of dietary fats such as milk fat globules enriched in long-chain triglycerides. Hydrolyzes short-, medium- and long-chain fatty acyls in triglycerides without apparent positional specificity. Can completely deacylate triacylglycerols. When the liver matures and bile salt synthesis increases, likely functions mainly as a galactolipase and monoacylglycerol lipase. Hydrolyzes monogalactosyldiglycerols (MGDG) and digalactosyldiacylglycerols (DGDG) present in a plant-based diet, releasing long-chain polyunsaturated fatty acids. Hydrolyzes medium- and long-chain fatty acyls in galactolipids. May act together with LIPF to hydrolyze partially digested triglycerides. Hydrolyzes long-chain monoglycerides with high efficiency. In cytotoxic T cells, contributes to perforin-dependent cell lysis, but is unlikely to mediate direct cytotoxicity. Also has low phospholipase activity. In neurons, required for the localization of the phospholipid 1-oleoyl-2-palmitoyl-PC (OPPC) to neurite tips through acyl chain remodeling of membrane phospholipids. The resulting OPPC-rich lipid membrane domain recruits the t-SNARE protein STX4 by selectively interacting with the STX4 transmembrane domain and this promotes surface expression of the dopamine transporter SLC6A3/DAT at neurite tips by facilitating fusion of SLC6A3-containing transport vesicles with the plasma membrane. The chain is Pancreatic lipase-related protein 2 (PNLIPRP2) from Sus scrofa (Pig).